Here is a 266-residue protein sequence, read N- to C-terminus: 3-methyl-2-oxobutanoate hydroxymethyltransferase (266 aa).

Asp45 and Asp84 together coordinate Mg(2+). 3-methyl-2-oxobutanoate contacts are provided by residues 45-46 (DS), Asp84, and Lys113. Mg(2+) is bound at residue Glu115. Glu183 serves as the catalytic Proton acceptor.

The protein belongs to the PanB family. In terms of assembly, homodecamer; pentamer of dimers. It depends on Mg(2+) as a cofactor.

The protein resides in the cytoplasm. It catalyses the reaction 3-methyl-2-oxobutanoate + (6R)-5,10-methylene-5,6,7,8-tetrahydrofolate + H2O = 2-dehydropantoate + (6S)-5,6,7,8-tetrahydrofolate. It functions in the pathway cofactor biosynthesis; (R)-pantothenate biosynthesis; (R)-pantoate from 3-methyl-2-oxobutanoate: step 1/2. In terms of biological role, catalyzes the reversible reaction in which hydroxymethyl group from 5,10-methylenetetrahydrofolate is transferred onto alpha-ketoisovalerate to form ketopantoate. This chain is 3-methyl-2-oxobutanoate hydroxymethyltransferase, found in Coxiella burnetii (strain Dugway 5J108-111).